Consider the following 428-residue polypeptide: Lupus La protein homolog A (428 aa).

One can recognise an HTH La-type RNA-binding domain in the interval 7–99 (KEQKLDSDTK…RRSPAKPLPE (93 aa)). In terms of domain architecture, RRM spans 111–203 (KSVYIKGFPT…EERKLNKSEE (93 aa)). Disordered stretches follow at residues 187-223 (EYHAKKNEERKLNKSEEKAKSKQVKKEAQKQAEDAER) and 323-428 (QESF…VGDQ). 2 short sequence motifs (nuclear localization signal) span residues 196–212 (RKLNKSEEKAKSKQVKK) and 316–332 (KKILEGKQESFNKRKGR). The 123-residue stretch at 227-349 (EERVGSLLKF…KGRGGKGNDS (123 aa)) folds into the xRRM domain. Composition is skewed to basic residues over residues 328–343 (KRKGRDGRKFKGKGRG) and 352–361 (RKRTQFQGKK). Positions 366-377 (SSDDEDDMEESE) are enriched in acidic residues. The segment covering 406–428 (RSLDDKAEDGPAVKQSKTEVGDQ) has biased composition (basic and acidic residues).

In terms of processing, phosphorylated.

The protein resides in the nucleus. La protein plays a role in the transcription of RNA polymerase III. It is most probably a transcription termination factor. Binds to the 3' termini of virtually all nascent polymerase III transcripts. The protein is Lupus La protein homolog A (ssb-a) of Xenopus laevis (African clawed frog).